The primary structure comprises 431 residues: Adenylosuccinate synthetase (431 aa).

Residues glycine 13–lysine 19 and glycine 41–threonine 43 contribute to the GTP site. Aspartate 14 serves as the catalytic Proton acceptor. The Mg(2+) site is built by aspartate 14 and glycine 41. IMP is bound by residues aspartate 14–lysine 17, asparagine 39–histidine 42, threonine 130, arginine 144, glutamine 225, threonine 240, and arginine 304. Histidine 42 (proton donor) is an active-site residue. Residue alanine 300–arginine 306 coordinates substrate. GTP contacts are provided by residues arginine 306, lysine 332–aspartate 334, and serine 414–glycine 416.

It belongs to the adenylosuccinate synthetase family. As to quaternary structure, homodimer. Mg(2+) is required as a cofactor.

It is found in the cytoplasm. The enzyme catalyses IMP + L-aspartate + GTP = N(6)-(1,2-dicarboxyethyl)-AMP + GDP + phosphate + 2 H(+). Its pathway is purine metabolism; AMP biosynthesis via de novo pathway; AMP from IMP: step 1/2. Its function is as follows. Plays an important role in the de novo pathway of purine nucleotide biosynthesis. Catalyzes the first committed step in the biosynthesis of AMP from IMP. The protein is Adenylosuccinate synthetase of Nitrosococcus oceani (strain ATCC 19707 / BCRC 17464 / JCM 30415 / NCIMB 11848 / C-107).